Reading from the N-terminus, the 365-residue chain is NAC domain-containing protein 37 (365 aa).

The 150-residue stretch at Val-9 to Lys-158 folds into the NAC domain. The DNA-binding element occupies Ile-109 to Ala-164.

Belongs to the plant vascular related NAC-domain protein family. In terms of assembly, interacts with NAC030/VND7. As to expression, expressed in root metaxylem pole and in shoot pre-procambium and procambium. Present in root developing xylems. Specifically expressed in vessels but not in interfascicular fibers in stems.

The protein resides in the nucleus. Transcription activator that binds to the secondary wall NAC binding element (SNBE), 5'-(T/A)NN(C/T)(T/C/G)TNNNNNNNA(A/C)GN(A/C/T)(A/T)-3', in the promoter of target genes. Involved in xylem formation by promoting the expression of secondary wall-associated transcription factors and of genes involved in secondary wall biosynthesis and programmed cell death, genes driven by the secondary wall NAC binding element (SNBE). Triggers thickening of secondary walls. The polypeptide is NAC domain-containing protein 37 (Arabidopsis thaliana (Mouse-ear cress)).